The sequence spans 314 residues: Olfactory receptor 1Q1 (314 aa).

The Extracellular portion of the chain corresponds to 1-25; sequence MDNSNWTSVSHFVLLGISTHPEEQI. Asparagine 5 carries an N-linked (GlcNAc...) asparagine glycan. Residues 26–49 form a helical membrane-spanning segment; sequence PLFLVFSLMYAINISGNLAIITLI. Topologically, residues 50–57 are cytoplasmic; the sequence is LSAPRLHI. Residues 58 to 79 traverse the membrane as a helical segment; sequence PMYIFLSNLALTDICFTSTTVP. Over 80-100 the chain is Extracellular; the sequence is KMLQIIFSPTKVISYTGCLAQ. Residues cysteine 97 and cysteine 189 are joined by a disulfide bond. The helical transmembrane segment at 101–120 threads the bilayer; sequence TYFFICFAVMENFILAVMAY. The Cytoplasmic segment spans residues 121-139; that stretch reads DRYIAICHPFHYTMILTRM. A helical transmembrane segment spans residues 140 to 158; sequence LCVKMVVMCHALSHLHAML. Topologically, residues 159–195 are extracellular; the sequence is HTFLIGQLIFCADNRIPHFFCDLYALMKISCTSTYLN. The chain crosses the membrane as a helical span at residues 196–219; it reads TLMIHTEGAVVISGALAFITASYA. Topologically, residues 220–236 are cytoplasmic; it reads CIILVVLRIPSAKGRWK. A helical membrane pass occupies residues 237-259; sequence TFSTCGSHLTVVAIFYGTLSWVY. Residues 260-272 lie on the Extracellular side of the membrane; the sequence is FRPLSSYSVTKGR. Residues 273-292 form a helical membrane-spanning segment; the sequence is IITVVYTVVTPMLNPFIYSL. The Cytoplasmic portion of the chain corresponds to 293–314; sequence RNGDVKGGFMKWMSRMQTFFFR.

Belongs to the G-protein coupled receptor 1 family.

The protein resides in the cell membrane. Functionally, odorant receptor. This chain is Olfactory receptor 1Q1 (OR1Q1), found in Homo sapiens (Human).